The following is a 355-amino-acid chain: Vacuolar protein sorting-associated protein 37C (355 aa).

Ser-29 bears the Phosphoserine mark. The 90-residue stretch at Val-78 to Ala-167 folds into the VPS37 C-terminal domain. The disordered stretch occupies residues Lys-159–Tyr-355. Pro residues-rich tracts occupy residues Ala-170–Thr-186 and Pro-194–Pro-214. The span at Ala-291–Ala-304 shows a compositional bias: low complexity. The span at Pro-321–Tyr-355 shows a compositional bias: pro residues.

It belongs to the VPS37 family. As to quaternary structure, component of the ESCRT-I complex (endosomal sorting complex required for transport I) which consists of TSG101, VPS28, a VPS37 protein (VPS37A to -D) and MVB12A or MVB12B in a 1:1:1:1 stoichiometry. Interacts with TSG101, VPS28, MVB12A and MVB12B. Component of the ESCRT-I complex (endosomal sorting complex required for transport I) which consists of TSG101, VPS28, a VPS37 protein (VPS37A to -D) and UBAP1 in a 1:1:1:1 stoichiometry. Interacts with HGS and STAM2. Interacts with CEP55. Post-translationally, phosphorylated by TBK1.

The protein localises to the late endosome membrane. In terms of biological role, component of the ESCRT-I complex, a regulator of vesicular trafficking process. Required for the sorting of endocytic ubiquitinated cargos into multivesicular bodies. May be involved in cell growth and differentiation. In Homo sapiens (Human), this protein is Vacuolar protein sorting-associated protein 37C (VPS37C).